We begin with the raw amino-acid sequence, 325 residues long: Elongation factor P--(R)-beta-lysine ligase (325 aa).

A substrate-binding site is contributed by 76–78; that stretch reads SPE. ATP is bound by residues 100-102 and Asn-109; that span reads RNE. Residue Tyr-118 coordinates substrate. Position 244 to 245 (244 to 245) interacts with ATP; the sequence is EL. Glu-251 lines the substrate pocket. Position 300 (Gly-300) interacts with ATP.

It belongs to the class-II aminoacyl-tRNA synthetase family. EpmA subfamily. Homodimer.

The enzyme catalyses D-beta-lysine + L-lysyl-[protein] + ATP = N(6)-((3R)-3,6-diaminohexanoyl)-L-lysyl-[protein] + AMP + diphosphate + H(+). Its function is as follows. With EpmB is involved in the beta-lysylation step of the post-translational modification of translation elongation factor P (EF-P) on 'Lys-34'. Catalyzes the ATP-dependent activation of (R)-beta-lysine produced by EpmB, forming a lysyl-adenylate, from which the beta-lysyl moiety is then transferred to the epsilon-amino group of EF-P 'Lys-34'. In Salmonella choleraesuis (strain SC-B67), this protein is Elongation factor P--(R)-beta-lysine ligase.